The primary structure comprises 69 residues: Amphipathic peptide CT2 (69 aa).

The signal sequence occupies residues 1–23 (MKTQFVILIVAVVLLQLIANSEA). Phe36 carries the post-translational modification Phenylalanine amide. Residues 40-69 (GLRNLDNLDDDIFEPEMSEADLRYLQDLLR) constitute a propeptide that is removed on maturation.

The protein belongs to the non-disulfide-bridged peptide (NDBP) superfamily. Short antimicrobial peptide (group 4) family. Expressed by the venom gland.

The protein resides in the secreted. It localises to the target cell membrane. Amphipathic peptide that shows antibacterial activities against both Gram-positive (MIC=10 uM, 20 uM and 20 uM against S.aureus, B.subtilis and S.agalactiae, respectively) and Gram-negative bacteria (MIC=20 uM, 10 uM, and 10 uM against E.coli, S.typhi, and P.aeruginosa, respectively). Is mildly hemolytic at its MIC range, but shows a strong cytotoxic activity at higher concentrations, reaching 84% lysis at 50 uM. The protein is Amphipathic peptide CT2 of Vaejovis mexicanus smithi (Mexican scorpion).